The sequence spans 255 residues: 4-hydroxy-tetrahydrodipicolinate reductase (255 aa).

NAD(+) contacts are provided by residues 9–14 (GFKGRM), 89–91 (GTT), and 115–118 (APNF). His145 acts as the Proton donor/acceptor in catalysis. Position 146 (His146) interacts with (S)-2,3,4,5-tetrahydrodipicolinate. Catalysis depends on Lys149, which acts as the Proton donor. 155-156 (GT) contacts (S)-2,3,4,5-tetrahydrodipicolinate.

This sequence belongs to the DapB family.

Its subcellular location is the cytoplasm. It catalyses the reaction (S)-2,3,4,5-tetrahydrodipicolinate + NAD(+) + H2O = (2S,4S)-4-hydroxy-2,3,4,5-tetrahydrodipicolinate + NADH + H(+). The enzyme catalyses (S)-2,3,4,5-tetrahydrodipicolinate + NADP(+) + H2O = (2S,4S)-4-hydroxy-2,3,4,5-tetrahydrodipicolinate + NADPH + H(+). The protein operates within amino-acid biosynthesis; L-lysine biosynthesis via DAP pathway; (S)-tetrahydrodipicolinate from L-aspartate: step 4/4. Catalyzes the conversion of 4-hydroxy-tetrahydrodipicolinate (HTPA) to tetrahydrodipicolinate. This chain is 4-hydroxy-tetrahydrodipicolinate reductase, found in Streptococcus thermophilus (strain CNRZ 1066).